We begin with the raw amino-acid sequence, 305 residues long: D-alanine--D-alanine ligase (305 aa).

One can recognise an ATP-grasp domain in the interval lysine 107–alanine 299. Proline 134–threonine 186 contacts ATP. Mg(2+) contacts are provided by aspartate 254, glutamate 266, and asparagine 268.

The protein belongs to the D-alanine--D-alanine ligase family. Requires Mg(2+) as cofactor. Mn(2+) is required as a cofactor.

The protein resides in the cytoplasm. The catalysed reaction is 2 D-alanine + ATP = D-alanyl-D-alanine + ADP + phosphate + H(+). Its pathway is cell wall biogenesis; peptidoglycan biosynthesis. In terms of biological role, cell wall formation. The polypeptide is D-alanine--D-alanine ligase (Syntrophotalea carbinolica (strain DSM 2380 / NBRC 103641 / GraBd1) (Pelobacter carbinolicus)).